Here is a 201-residue protein sequence, read N- to C-terminus: Proteasome subunit beta 1 (201 aa).

A propeptide spans 1-10 (MNGSPSAMKG) (removed in mature form; by autocatalysis). T11 serves as the catalytic Nucleophile.

The protein belongs to the peptidase T1B family. The 20S proteasome core is composed of 14 alpha and 14 beta subunits that assemble into four stacked heptameric rings, resulting in a barrel-shaped structure. The two inner rings, each composed of seven catalytic beta subunits, are sandwiched by two outer rings, each composed of seven alpha subunits. The catalytic chamber with the active sites is on the inside of the barrel. Has a gated structure, the ends of the cylinder being occluded by the N-termini of the alpha-subunits. Is capped at one or both ends by the proteasome regulatory ATPase, PAN.

Its subcellular location is the cytoplasm. The catalysed reaction is Cleavage of peptide bonds with very broad specificity.. With respect to regulation, the formation of the proteasomal ATPase PAN-20S proteasome complex, via the docking of the C-termini of PAN into the intersubunit pockets in the alpha-rings, triggers opening of the gate for substrate entry. Interconversion between the open-gate and close-gate conformations leads to a dynamic regulation of the 20S proteasome proteolysis activity. Functionally, component of the proteasome core, a large protease complex with broad specificity involved in protein degradation. This chain is Proteasome subunit beta 1, found in Thermococcus gammatolerans (strain DSM 15229 / JCM 11827 / EJ3).